The chain runs to 331 residues: Ferredoxin--NADP reductase 2 (331 aa).

7 residues coordinate FAD: E37, Q45, Y50, V90, F124, D286, and T327.

This sequence belongs to the ferredoxin--NADP reductase type 2 family. Homodimer. It depends on FAD as a cofactor.

It catalyses the reaction 2 reduced [2Fe-2S]-[ferredoxin] + NADP(+) + H(+) = 2 oxidized [2Fe-2S]-[ferredoxin] + NADPH. The protein is Ferredoxin--NADP reductase 2 of Listeria innocua serovar 6a (strain ATCC BAA-680 / CLIP 11262).